The sequence spans 471 residues: 6-phosphofructo-2-kinase/fructose-2,6-bisphosphatase 1 (471 aa).

N-acetylserine is present on Ser-2. Residues Ser-2–Thr-250 form a 6-phosphofructo-2-kinase region. Ser-33 bears the Phosphoserine; by PKA mark. ATP is bound at residue Gly-49 to Tyr-57. Beta-D-fructose 6-phosphate contacts are provided by Arg-82 and Arg-105. The active site involves Asp-131. Residues Thr-133 and Arg-139 each coordinate beta-D-fructose 6-phosphate. Position 141 is a phosphoserine (Ser-141). Cys-161 is an active-site residue. Residue Asn-170 to Lys-175 coordinates ATP. 3 residues coordinate beta-D-fructose 6-phosphate: Lys-175, Arg-196, and Tyr-200. The fructose-2,6-bisphosphatase stretch occupies residues Pro-251–Tyr-471. Position 258 (Arg-258) interacts with beta-D-fructose 2,6-bisphosphate. His-259 acts as the Tele-phosphohistidine intermediate in catalysis. Asn-265, Gly-271, and Arg-308 together coordinate beta-D-fructose 2,6-bisphosphate. The active-site Proton donor/acceptor is Glu-328. Residues Tyr-339, Arg-353, Lys-357, Tyr-368, Gln-394, and Arg-398 each coordinate beta-D-fructose 2,6-bisphosphate. Phe-350–Arg-353 serves as a coordination point for ATP. ATP contacts are provided by residues Gln-394–Arg-398 and Tyr-430.

This sequence in the C-terminal section; belongs to the phosphoglycerate mutase family. As to quaternary structure, homodimer. Liver.

It catalyses the reaction beta-D-fructose 2,6-bisphosphate + H2O = beta-D-fructose 6-phosphate + phosphate. The enzyme catalyses beta-D-fructose 6-phosphate + ATP = beta-D-fructose 2,6-bisphosphate + ADP + H(+). Its activity is regulated as follows. Phosphorylation at Ser-33 inhibits the kinase and activates the bisphosphatase. Synthesis and degradation of fructose 2,6-bisphosphate. In Homo sapiens (Human), this protein is 6-phosphofructo-2-kinase/fructose-2,6-bisphosphatase 1.